Here is a 128-residue protein sequence, read N- to C-terminus: Putative esterase aq_1494 (128 aa).

Residue D15 is part of the active site.

Belongs to the 4-hydroxybenzoyl-CoA thioesterase family.

This is Putative esterase aq_1494 from Aquifex aeolicus (strain VF5).